The sequence spans 151 residues: Arginine repressor (151 aa).

It belongs to the ArgR family.

It is found in the cytoplasm. It functions in the pathway amino-acid biosynthesis; L-arginine biosynthesis [regulation]. In terms of biological role, regulates arginine biosynthesis genes. The polypeptide is Arginine repressor (Haemophilus influenzae (strain PittGG)).